A 318-amino-acid polypeptide reads, in one-letter code: Mediator of RNA polymerase II transcription subunit 30 (318 aa).

Positions 1–13 are enriched in low complexity; the sequence is MWKYGQNQGNQGP. Disordered stretches follow at residues 1 to 92 and 120 to 142; these read MWKY…QQQQ and GGGVVPQQQQQQPQQNMPQQNIP. Over residues 14-33 the composition is skewed to gly residues; that stretch reads SSGGGGGGGPNMMPMGGFGM. Composition is skewed to low complexity over residues 34–55, 78–92, and 124–142; these read QHGNMQQMHMSPQHQQQQQQMG, PGMSPQHQMQQQQQQ, and VPQQQQQQPQQNMPQQNIP.

Belongs to the Mediator complex subunit 30 family. Component of the Mediator complex, which includes at least CDK8, MED4, MED6, MED11, MED14, MED17, MED18, MED20, MED21, MED22, MED27, MED28, MED30 and MED31.

It is found in the nucleus. Its function is as follows. Component of the Mediator complex, a coactivator involved in the regulated transcription of nearly all RNA polymerase II-dependent genes. Mediator functions as a bridge to convey information from gene-specific regulatory proteins to the basal RNA polymerase II transcription machinery. Mediator is recruited to promoters by direct interactions with regulatory proteins and serves as a scaffold for the assembly of a functional preinitiation complex with RNA polymerase II and the general transcription factors. The protein is Mediator of RNA polymerase II transcription subunit 30 (MED30) of Drosophila melanogaster (Fruit fly).